The sequence spans 856 residues: Villin-like protein (856 aa).

Gelsolin-like repeat units lie at residues 22–74, 146–186, 263–307, 401–450, 521–561, and 624–665; these read RKMV…EAQG, VSAT…SEKA, LVVL…QERK, LHRQ…DEIE, TRTM…DQRE, and LVLA…WKEA. A disordered region spans residues 762–796; it reads SQDSSENDLVRSPKSAGSRTSSSVSSTSATINGGL. Over residues 776-791 the composition is skewed to low complexity; the sequence is SAGSRTSSSVSSTSAT. Residues 790–856 form the HP domain; that stretch reads ATINGGLRRE…RQEKKQLGFF (67 aa).

This sequence belongs to the villin/gelsolin family. In terms of tissue distribution, ubiquitously expressed in 16 tissues examined.

Possible tumor suppressor. The polypeptide is Villin-like protein (VILL) (Homo sapiens (Human)).